Reading from the N-terminus, the 746-residue chain is Centromere protein I (746 aa).

The segment at 1–24 (MATQRVTRNSQQQNRISQGSNSRQ) is disordered.

This sequence belongs to the CENP-I/CTF3 family. In terms of assembly, component of the CENPA-CAD complex, composed of CENPI, CENPK, CENPL, CENPO, CENPP, CENPQ, CENPR and CENPS. The CENPA-CAD complex interacts with the CENPA-NAC complex, at least composed of CENPA, CENPC, CENPH, CENPM, CENPN, CENPT and CENPU. Interacts with SENP6. Sumoylated. Sumoylated form can be polyubiquitinated by RNF4, leading to its degradation. Desumoylation by SENP6 prevents its degradation.

The protein resides in the nucleus. It is found in the chromosome. The protein localises to the centromere. Component of the CENPA-CAD (nucleosome distal) complex, a complex recruited to centromeres which is involved in assembly of kinetochore proteins, mitotic progression and chromosome segregation. May be involved in incorporation of newly synthesized CENPA into centromeres via its interaction with the CENPA-NAC complex. Required for the localization of CENPF, MAD1L1 and MAD2 (MAD2L1 or MAD2L2) to kinetochores. Involved in the response of gonadal tissues to follicle-stimulating hormone. The polypeptide is Centromere protein I (Cenpi) (Mus musculus (Mouse)).